Consider the following 601-residue polypeptide: Chaperone protein DnaK (601 aa).

A Phosphothreonine; by autocatalysis modification is found at Thr175. The segment at 570 to 601 is disordered; sequence FAQKAASKETSKNEQNEDGSIDAEIKEEDPKA. Residues 575 to 584 are compositionally biased toward basic and acidic residues; it reads ASKETSKNEQ. Residues 585-601 are compositionally biased toward acidic residues; sequence NEDGSIDAEIKEEDPKA.

It belongs to the heat shock protein 70 family.

Its function is as follows. Acts as a chaperone. This is Chaperone protein DnaK from Mycoplasma mobile (strain ATCC 43663 / 163K / NCTC 11711) (Mesomycoplasma mobile).